Here is a 74-residue protein sequence, read N- to C-terminus: Ubiquitin-like protein FUBI (74 aa).

This sequence belongs to the ubiquitin family.

Its function is as follows. Confers arsenite resistance. The polypeptide is Ubiquitin-like protein FUBI (FAU) (Cricetulus griseus (Chinese hamster)).